A 351-amino-acid chain; its full sequence is Ferrochelatase (351 aa).

Fe cation-binding residues include histidine 220 and glutamate 301.

It belongs to the ferrochelatase family.

Its subcellular location is the cytoplasm. It carries out the reaction heme b + 2 H(+) = protoporphyrin IX + Fe(2+). It functions in the pathway porphyrin-containing compound metabolism; protoheme biosynthesis; protoheme from protoporphyrin-IX: step 1/1. Catalyzes the ferrous insertion into protoporphyrin IX. The polypeptide is Ferrochelatase (Rhodobacter capsulatus (Rhodopseudomonas capsulata)).